The primary structure comprises 92 residues: Small ribosomal subunit protein uS19c (92 aa).

The protein belongs to the universal ribosomal protein uS19 family.

It is found in the plastid. It localises to the chloroplast. In terms of biological role, protein S19 forms a complex with S13 that binds strongly to the 16S ribosomal RNA. The protein is Small ribosomal subunit protein uS19c of Pyropia yezoensis (Susabi-nori).